The chain runs to 330 residues: Probable UDP-3-O-acylglucosamine N-acyltransferase 1, mitochondrial (330 aa).

Residues 1-52 (MANSLRTLFSVSTHGVFLNKRSSYRVRKVFVGMPLRICSEIPRFVSVSCIRS) constitute a mitochondrion transit peptide. Residue 160-162 (FGF) participates in UDP-N-acetyl-alpha-D-glucosamine binding. Asp210 and Gln214 together coordinate hexadecanoate. His217 functions as the Proton acceptor in the catalytic mechanism. Residues Asn218, Ser236, and His254 each contribute to the UDP-N-acetyl-alpha-D-glucosamine site.

It belongs to the transferase hexapeptide repeat family. LpxD subfamily. Homotrimer.

It is found in the mitochondrion. It catalyses the reaction a UDP-3-O-[(3R)-3-hydroxyacyl]-alpha-D-glucosamine + a (3R)-hydroxyacyl-[ACP] = a UDP-2-N,3-O-bis[(3R)-3-hydroxyacyl]-alpha-D-glucosamine + holo-[ACP] + H(+). It functions in the pathway glycolipid biosynthesis; lipid IV(A) biosynthesis; lipid IV(A) from (3R)-3-hydroxytetradecanoyl-[acyl-carrier-protein] and UDP-N-acetyl-alpha-D-glucosamine: step 3/6. Its function is as follows. Involved in the biosynthesis of lipid A, a phosphorylated glycolipid that in bacteria anchors the lipopolysaccharide to the outer membrane of the cell. Lipid A-like molecules in plants may serve as structural components of the outer membranes of mitochondria and/or chloroplasts, or may be involved in signal transduction or plant defense responses. The sequence is that of Probable UDP-3-O-acylglucosamine N-acyltransferase 1, mitochondrial (LPXD1) from Arabidopsis thaliana (Mouse-ear cress).